Here is a 360-residue protein sequence, read N- to C-terminus: MEVSGVVLRQIPCVSSGSVAGLRLVSEFSGNTRTVGFRTRRFRGIVCNNEFADKGHVNYYIEPTRCGEEKEKVKVMEKEKKALKKKAKVLKSLSKNLDMFSSIGFGLDPEAGLVGEIQTKTISEATEILVKQLEQLKAEEKILKKQRKEEKAKAKAMKKMTEMDSESSSSSESSDSDCDKGKVVDMSSLRNKAKPVLEPLQPEATVATLPRIQEDAISCKNTSEALQIALQTSTIFPSMANPGQTLKTVEAVSVVGLPLNRVEVCMGGKCKRSGGALLLDEFQRAMTGFEGSAVACKCMGKCRDGPNVRVVKETDAVMTDSVRTPSKTLCVGVGLQDVETIVTSFFDEECSREGLGSVSY.

The segment at 153–182 (KAKAMKKMTEMDSESSSSSESSDSDCDKGK) is disordered. Residues Cys265, Cys270, Cys298, and Cys302 each contribute to the [2Fe-2S] cluster site.

Belongs to the diacylglycerol acyltransferase family. It depends on [2Fe-2S] cluster as a cofactor.

It carries out the reaction an acyl-CoA + a 1,2-diacyl-sn-glycerol = a triacyl-sn-glycerol + CoA. Its pathway is glycerolipid metabolism; triacylglycerol biosynthesis. Functionally, involved in triacylglycerol (TAG) biosynthesis. Catalyzes the acylation of the sn-3 hydroxy group of sn-1,2-diacylglycerol using acyl-CoA. May preferentially use linolenoyl-CoA as substrate and to a lesser extent linoleoyl-CoA. May contribute to the active recycling of linoleate and linolenate into TAG when seed oil breakdown is blocked. This is Diacylglycerol O-acyltransferase 3 from Arabidopsis thaliana (Mouse-ear cress).